The primary structure comprises 618 residues: Dihydroxy-acid dehydratase 1 (618 aa).

Asp81 is a Mg(2+) binding site. Position 122 (Cys122) interacts with [2Fe-2S] cluster. 2 residues coordinate Mg(2+): Asp123 and Lys124. An N6-carboxylysine modification is found at Lys124. Residue Cys195 participates in [2Fe-2S] cluster binding. Position 491 (Glu491) interacts with Mg(2+). The active-site Proton acceptor is Ser517.

Belongs to the IlvD/Edd family. In terms of assembly, homodimer. Requires [2Fe-2S] cluster as cofactor. Mg(2+) serves as cofactor.

It carries out the reaction (2R)-2,3-dihydroxy-3-methylbutanoate = 3-methyl-2-oxobutanoate + H2O. The enzyme catalyses (2R,3R)-2,3-dihydroxy-3-methylpentanoate = (S)-3-methyl-2-oxopentanoate + H2O. Its pathway is amino-acid biosynthesis; L-isoleucine biosynthesis; L-isoleucine from 2-oxobutanoate: step 3/4. The protein operates within amino-acid biosynthesis; L-valine biosynthesis; L-valine from pyruvate: step 3/4. Functionally, functions in the biosynthesis of branched-chain amino acids. Catalyzes the dehydration of (2R,3R)-2,3-dihydroxy-3-methylpentanoate (2,3-dihydroxy-3-methylvalerate) into 2-oxo-3-methylpentanoate (2-oxo-3-methylvalerate) and of (2R)-2,3-dihydroxy-3-methylbutanoate (2,3-dihydroxyisovalerate) into 2-oxo-3-methylbutanoate (2-oxoisovalerate), the penultimate precursor to L-isoleucine and L-valine, respectively. In Pseudoalteromonas translucida (strain TAC 125), this protein is Dihydroxy-acid dehydratase 1.